A 344-amino-acid chain; its full sequence is Methionine import ATP-binding protein MetN (344 aa).

The 239-residue stretch at 7–245 (ISLKKISRCF…PQDDTTIAML (239 aa)) folds into the ABC transporter domain. An ATP-binding site is contributed by 42 to 49 (GRSGAGKS).

The protein belongs to the ABC transporter superfamily. Methionine importer (TC 3.A.1.24) family. As to quaternary structure, the complex is composed of two ATP-binding proteins (MetN), two transmembrane proteins (MetI) and a solute-binding protein (MetQ).

The protein resides in the cell inner membrane. It catalyses the reaction L-methionine(out) + ATP + H2O = L-methionine(in) + ADP + phosphate + H(+). It carries out the reaction D-methionine(out) + ATP + H2O = D-methionine(in) + ADP + phosphate + H(+). Its function is as follows. Part of the ABC transporter complex MetNIQ involved in methionine import. Responsible for energy coupling to the transport system. The chain is Methionine import ATP-binding protein MetN from Bartonella henselae (strain ATCC 49882 / DSM 28221 / CCUG 30454 / Houston 1) (Rochalimaea henselae).